We begin with the raw amino-acid sequence, 131 residues long: D-ribose pyranase (131 aa).

Residue His-20 is the Proton donor of the active site. Substrate contacts are provided by residues Asp-28, His-98, and 120–122; that span reads FSN.

It belongs to the RbsD / FucU family. RbsD subfamily. Homodecamer.

It localises to the cytoplasm. It catalyses the reaction beta-D-ribopyranose = beta-D-ribofuranose. Its pathway is carbohydrate metabolism; D-ribose degradation; D-ribose 5-phosphate from beta-D-ribopyranose: step 1/2. Its function is as follows. Catalyzes the interconversion of beta-pyran and beta-furan forms of D-ribose. In Oenococcus oeni (strain ATCC BAA-331 / PSU-1), this protein is D-ribose pyranase.